The following is a 265-amino-acid chain: Thiazole synthase (265 aa).

The active-site Schiff-base intermediate with DXP is Lys-106. 1-deoxy-D-xylulose 5-phosphate-binding positions include Gly-167, Ala-193–Gly-194, and Asn-215–Ser-216.

Belongs to the ThiG family. Homotetramer. Forms heterodimers with either ThiH or ThiS.

It is found in the cytoplasm. It carries out the reaction [ThiS sulfur-carrier protein]-C-terminal-Gly-aminoethanethioate + 2-iminoacetate + 1-deoxy-D-xylulose 5-phosphate = [ThiS sulfur-carrier protein]-C-terminal Gly-Gly + 2-[(2R,5Z)-2-carboxy-4-methylthiazol-5(2H)-ylidene]ethyl phosphate + 2 H2O + H(+). Its pathway is cofactor biosynthesis; thiamine diphosphate biosynthesis. In terms of biological role, catalyzes the rearrangement of 1-deoxy-D-xylulose 5-phosphate (DXP) to produce the thiazole phosphate moiety of thiamine. Sulfur is provided by the thiocarboxylate moiety of the carrier protein ThiS. In vitro, sulfur can be provided by H(2)S. The chain is Thiazole synthase from Prochlorococcus marinus (strain MIT 9515).